The chain runs to 440 residues: MVSSNQDLLISPSIPYGEIAVPPSKSHSLRAILFASLSKGTSIIENCLFSPDSQAMLTACEKMGAHVRRIGDSLHIQGNPDPHHCHPRYFHMGNSGIALRFLTALSTLSPTPTLITGSHTLKRRPIAPLLSSLKQLGAHIRQKTSSSIPFTIHGPLSPGHVTISGQDSQYASALAITAALAPYPLSFSIENLKERPWFDLTLDWLHSLNISFLRDQDSLTFPGGQSLESFSYSVPGDYSSAAFLASFGLLSSSSKPTILRNLSSQDSQGDKLLFSLLKQLGAHILIGKHHIEMHPSSFSGGEIDMDPFIDALPILAVLCCFAKNPSRLYNALGAKDKESNRIEAIAHELQKMGGSVHPTRDGLYIEPSRLHGAVVDSHNDHRIAMALAVAGVHASSGQTLLCNTQCINKSFPYFVIAAQTLHANVRHYQADFPLRSSFCR.

Positions 25, 26, and 30 each coordinate 3-phosphoshikimate. Lys-25 contacts phosphoenolpyruvate. Residues Gly-96 and Arg-124 each coordinate phosphoenolpyruvate. 3-phosphoshikimate-binding residues include Ser-168, Gln-169, Asp-310, and Lys-337. Gln-169 contacts phosphoenolpyruvate. Catalysis depends on Asp-310, which acts as the Proton acceptor. Phosphoenolpyruvate contacts are provided by Arg-341, Arg-382, and Lys-409.

Belongs to the EPSP synthase family. Monomer.

The protein resides in the cytoplasm. It catalyses the reaction 3-phosphoshikimate + phosphoenolpyruvate = 5-O-(1-carboxyvinyl)-3-phosphoshikimate + phosphate. Its pathway is metabolic intermediate biosynthesis; chorismate biosynthesis; chorismate from D-erythrose 4-phosphate and phosphoenolpyruvate: step 6/7. Its function is as follows. Catalyzes the transfer of the enolpyruvyl moiety of phosphoenolpyruvate (PEP) to the 5-hydroxyl of shikimate-3-phosphate (S3P) to produce enolpyruvyl shikimate-3-phosphate and inorganic phosphate. The sequence is that of 3-phosphoshikimate 1-carboxyvinyltransferase from Chlamydia trachomatis serovar D (strain ATCC VR-885 / DSM 19411 / UW-3/Cx).